Here is a 226-residue protein sequence, read N- to C-terminus: Probable thiol methyltransferase 2 (226 aa).

Residues Trp-29, Trp-33, Trp-40, and Gly-67 each contribute to the S-adenosyl-L-methionine site. Ser-79 carries the post-translational modification Phosphoserine. S-adenosyl-L-methionine is bound by residues Asp-88, 116-117 (DF), and Tyr-132.

This sequence belongs to the class I-like SAM-binding methyltransferase superfamily. TPMT family.

It catalyses the reaction a thiol + S-adenosyl-L-methionine = a methyl thioether + S-adenosyl-L-homocysteine + H(+). S-adenosyl-L-methionine-dependent methyltransferase. The chain is Probable thiol methyltransferase 2 (HOL3) from Arabidopsis thaliana (Mouse-ear cress).